The chain runs to 91 residues: LYR motif-containing protein 4 (91 aa).

The pantetheine 4'-phosphate site is built by Arg6 and Lys44. Lys47 is subject to N6-succinyllysine.

This sequence belongs to the complex I LYR family. As to quaternary structure, homodimer. Component of the mitochondrial core iron-sulfur cluster (ISC) complex composed of NFS1, LYRM4, NDUFAB1, ISCU, FXN, and FDX2; this complex is a heterohexamer containing two copies of each monomer. Component of the cyteine desulfurase complex composed of NFS1, LYRM4 and NDUFAB1; this complex contributes to the stability and cysteine desulfurase activity of NFS1. Interacts with FXN; this interaction is nickel-dependent. Interacts with the cytoplasmic form of NFS1; the complex increases the stability of NFS1. Forms a complex with the cytoplasmic form of NFS1; this complex increases the stability and cysteine desulfurase activity of NFS1. Interacts with NFS1.

The protein resides in the mitochondrion. Its subcellular location is the nucleus. Its pathway is cofactor biosynthesis; iron-sulfur cluster biosynthesis. Functionally, stabilizing factor, of the core iron-sulfur cluster (ISC) assembly complex, that regulates, in association with NDUFAB1, the stability and the cysteine desulfurase activity of NFS1 and participates in the [2Fe-2S] clusters assembly on the scaffolding protein ISCU. The core iron-sulfur cluster (ISC) assembly complex is involved in the de novo synthesis of a [2Fe-2S] cluster, the first step of the mitochondrial iron-sulfur protein biogenesis. This process is initiated by the cysteine desulfurase complex (NFS1:LYRM4:NDUFAB1) that produces persulfide which is delivered on the scaffold protein ISCU in a FXN-dependent manner. Then this complex is stabilized by FDX2 which provides reducing equivalents to accomplish the [2Fe-2S] cluster assembly. Finally, the [2Fe-2S] cluster is transferred from ISCU to chaperone proteins, including HSCB, HSPA9 and GLRX5. May also participates in the iron-sulfur protein biogenesis in the cytoplasm through its interaction with the cytoplasmic form of NFS1. This Bos taurus (Bovine) protein is LYR motif-containing protein 4.